Here is a 274-residue protein sequence, read N- to C-terminus: Penicillin-insensitive murein endopeptidase (274 aa).

The N-terminal stretch at 1–19 (MKKTALALLALLVSSASLA) is a signal peptide. 3 disulfides stabilise this stretch: C44–C265, C187–C235, and C216–C223. Residues H110, H113, D120, D147, H150, and H211 each coordinate Zn(2+). The interval 225–274 (DQPLPPPGDGCGAELQSWFEPPEPGTTKPEKKTPPPLPPSCQALLDEHVL) is disordered.

It belongs to the peptidase M74 family. Dimer. It depends on Zn(2+) as a cofactor.

Its subcellular location is the periplasm. Functionally, murein endopeptidase that cleaves the D-alanyl-meso-2,6-diamino-pimelyl amide bond that connects peptidoglycan strands. Likely plays a role in the removal of murein from the sacculus. The sequence is that of Penicillin-insensitive murein endopeptidase from Citrobacter koseri (strain ATCC BAA-895 / CDC 4225-83 / SGSC4696).